The primary structure comprises 94 residues: Co-chaperonin GroES (94 aa).

This sequence belongs to the GroES chaperonin family. Heptamer of 7 subunits arranged in a ring. Interacts with the chaperonin GroEL.

Its subcellular location is the cytoplasm. Together with the chaperonin GroEL, plays an essential role in assisting protein folding. The GroEL-GroES system forms a nano-cage that allows encapsulation of the non-native substrate proteins and provides a physical environment optimized to promote and accelerate protein folding. GroES binds to the apical surface of the GroEL ring, thereby capping the opening of the GroEL channel. The protein is Co-chaperonin GroES of Streptococcus pneumoniae serotype 19F (strain G54).